The chain runs to 506 residues: SPbeta prophage-derived uncharacterized protein YonE (506 aa).

Residues 473 to 506 are disordered; that stretch reads YTFTGNEVGRPNEGNKNNDNTVKSATSNGNDNPI. A compositionally biased stretch (polar residues) spans 486-506; it reads GNKNNDNTVKSATSNGNDNPI.

The protein is SPbeta prophage-derived uncharacterized protein YonE (yonE) of Bacillus subtilis (strain 168).